The sequence spans 76 residues: uncharacterized protein (76 aa).

The HTH cro/C1-type domain maps to 15–69; it reads VRIVRKEQNLRQDELAGVAGVGLRFIVDLEAGKPTAQIGKVLQVLQTLGCSIDIL. The segment at residues 26–45 is a DNA-binding region (H-T-H motif); the sequence is QDELAGVAGVGLRFIVDLEA.

This is an uncharacterized protein from Sinorhizobium fredii (strain NBRC 101917 / NGR234).